The following is a 190-amino-acid chain: Potassium-transporting ATPase KdpC subunit (190 aa).

The chain crosses the membrane as a helical span at residues L13–A33.

Belongs to the KdpC family. As to quaternary structure, the system is composed of three essential subunits: KdpA, KdpB and KdpC.

The protein resides in the cell inner membrane. In terms of biological role, part of the high-affinity ATP-driven potassium transport (or Kdp) system, which catalyzes the hydrolysis of ATP coupled with the electrogenic transport of potassium into the cytoplasm. This subunit acts as a catalytic chaperone that increases the ATP-binding affinity of the ATP-hydrolyzing subunit KdpB by the formation of a transient KdpB/KdpC/ATP ternary complex. This Leptospira interrogans serogroup Icterohaemorrhagiae serovar copenhageni (strain Fiocruz L1-130) protein is Potassium-transporting ATPase KdpC subunit.